Here is a 425-residue protein sequence, read N- to C-terminus: Isocitrate dehydrogenase [NADP] (425 aa).

Residue Thr114 participates in NADP(+) binding. Positions 123, 125, 129, 139, and 162 each coordinate D-threo-isocitrate. Residue Asp316 participates in Mg(2+) binding. Residues 348–354, Asn361, Tyr400, and Arg404 each bind NADP(+); that span reads HGTAPKY.

It belongs to the isocitrate and isopropylmalate dehydrogenases family. As to quaternary structure, homodimer. It depends on Mg(2+) as a cofactor. Requires Mn(2+) as cofactor.

It carries out the reaction D-threo-isocitrate + NADP(+) = 2-oxoglutarate + CO2 + NADPH. In terms of biological role, catalyzes the oxidative decarboxylation of isocitrate to 2-oxoglutarate and carbon dioxide with the concomitant reduction of NADP(+). The chain is Isocitrate dehydrogenase [NADP] (icd) from Helicobacter pylori (strain ATCC 700392 / 26695) (Campylobacter pylori).